Consider the following 55-residue polypeptide: Neurotoxin BmKX-A1-S31 (55 aa).

A signal peptide spans 1-23 (MKIFFAVLVILVLFSMLIWTAYG). Cystine bridges form between Cys30/Cys45, Cys36/Cys50, and Cys39/Cys53.

As to expression, expressed by the venom gland.

Its subcellular location is the secreted. This chain is Neurotoxin BmKX-A1-S31, found in Olivierus martensii (Manchurian scorpion).